Consider the following 765-residue polypeptide: Nucleolar transcription factor 1 (765 aa).

Methionine 1 is subject to N-acetylmethionine. Residues 1–21 (MNGEADCPTDLEMAAPKGQDR) are disordered. 2 consecutive DNA-binding regions (HMG box) follow at residues 112 to 180 (PKKP…ARFR) and 196 to 264 (PEKP…RDYI). The residue at position 201 (threonine 201) is a Phosphothreonine. 3 positions are modified to phosphoserine: serine 273, serine 336, and serine 364. Positions 298–362 (TKPPPNSYSL…DYEVELLRFL (65 aa)) form a DNA-binding region, HMG box 3. A compositionally biased stretch (basic and acidic residues) spans 370-379 (QQRVLGEEKM). Positions 370 to 411 (QQRVLGEEKMLNINKKQTTSPASKKPSQEGGKGGSEKPKRPV) are disordered. Phosphoserine occurs at positions 389, 412, 433, 435, 484, 495, 546, 584, and 638. 3 DNA-binding regions (HMG box) span residues 407–475 (PKRP…GGER), 482–549 (PESP…SEMR), and 568–634 (KKPP…DLWV). The segment at 456 to 487 (YKAREAALKAQSERKPGGEREDRGKLPESPKR) is disordered. The segment covering 457 to 487 (KAREAALKAQSERKPGGEREDRGKLPESPKR) has biased composition (basic and acidic residues). Residues 546 to 576 (SEMRAPPAATNSSKKMKFQGEPKKPPMNGYQ) form a disordered region. The segment at 649–765 (ISNKRKNMTK…SGDSSDSGSN (117 aa)) is disordered. A compositionally biased stretch (polar residues) spans 664–674 (PKSSRTTLQSK). Acidic residues predominate over residues 677–746 (SEEDDDEEEE…DDDEDEDNES (70 aa)). Residues 747 to 765 (EGSSSSSSSSGDSSDSGSN) are compositionally biased toward low complexity.

In terms of assembly, homodimer. Part of Pol I pre-initiation complex (PIC), in which Pol I core assembles with RRN3 and promoter-bound UTBF and SL1/TIF-IB complex. Interacts with TOP2A in the context of Pol I complex. Interacts with TBP. Interacts with TAF1A. Interacts with RASL11A. Binds to IRS1 and PIK3CA. Interacts with DHX33. Interacts with PHF6. Interacts with CEBPA (isoform 1 and isoform 4). Interacts with DDX11. Interacts with NOP53. Interacts with ALKBH2. Phosphorylated and activated by PIK3CA.

It is found in the nucleus. Its subcellular location is the nucleolus. Recognizes the ribosomal RNA gene promoter and activates transcription mediated by RNA polymerase I through cooperative interactions with the transcription factor SL1/TIF-IB complex. It binds specifically to the upstream control element. This chain is Nucleolar transcription factor 1 (Ubtf), found in Mus musculus (Mouse).